A 360-amino-acid chain; its full sequence is Tyrosine-protein phosphatase non-receptor type 7 (360 aa).

Residues 1 to 37 (MVQAHGGRSRAQPLTLSLGAAMTQPPPEKTPAKKHVR) are disordered. Residues 38–51 (LQERRGSNVALMLD) form an interaction with MAP kinases region. The residue at position 44 (S44) is a Phosphoserine. Position 66 is a phosphothreonine (T66). Phosphoserine occurs at positions 93, 110, and 143. The Tyrosine-protein phosphatase domain occupies 97-350 (LEEEFLKIPS…QFLHHTLALY (254 aa)). Substrate is bound by residues D257, 291-297 (CSAGIGR), and Q335. The active-site Phosphocysteine intermediate is the C291. Cysteine sulfenic acid (-SOH) is present on C291.

The protein belongs to the protein-tyrosine phosphatase family. Non-receptor class subfamily. In terms of assembly, monomer. Interacts with MAPK1, MAPK3 and several other MAP kinases. Post-translationally, phosphorylated on serine residues in resting T-cells. Phosphorylation increases upon exposure to stimuli that increase intracellular cAMP levels. Phosphorylation leads to dissociation of bound MAP kinases. Oxidized at active site cysteine. Treatment with pervanadate (vanadate and H(2)O(2)) or with antigen enhanced oxidation of active site cysteine. In terms of tissue distribution, expressed exclusively in thymus and spleen.

It localises to the cytoplasm. It is found in the cytoskeleton. The enzyme catalyses O-phospho-L-tyrosyl-[protein] + H2O = L-tyrosyl-[protein] + phosphate. Inhibited in cells after FCER1A triggering. Functionally, protein phosphatase that acts preferentially on tyrosine-phosphorylated MAPK1. Plays a role in the regulation of T and B-lymphocyte development and signal transduction. The chain is Tyrosine-protein phosphatase non-receptor type 7 (PTPN7) from Homo sapiens (Human).